The sequence spans 2359 residues: Pre-mRNA-processing-splicing factor 8B (2359 aa).

A disordered region spans residues 1-50; that stretch reads MWNIDGTSLAPPGTDGSRMQTPSHPADHPSYTAPSNRNTPTVPTPEDAEA. Residues 32 to 41 are compositionally biased toward polar residues; it reads TAPSNRNTPT. An MPN domain is found at 2129–2260; the sequence is TYIMPKNILK…LTSYKLTQAG (132 aa).

Its subcellular location is the nucleus. Functionally, functions as a scaffold that mediates the ordered assembly of spliceosomal proteins and snRNAs. Required for the assembly of the U4/U6-U5 tri-snRNP complex. This is Pre-mRNA-processing-splicing factor 8B from Arabidopsis thaliana (Mouse-ear cress).